The following is a 247-amino-acid chain: Probable transcriptional regulatory protein PBPRA1113 (247 aa).

The protein belongs to the TACO1 family.

It localises to the cytoplasm. In Photobacterium profundum (strain SS9), this protein is Probable transcriptional regulatory protein PBPRA1113.